A 571-amino-acid polypeptide reads, in one-letter code: GABA-specific permease (571 aa).

The Cytoplasmic segment spans residues methionine 1–glutamine 73. Residues phenylalanine 74–alanine 94 traverse the membrane as a helical segment. Residues serine 95–proline 105 lie on the Vacuolar side of the membrane. The helical transmembrane segment at alanine 106 to methionine 126 threads the bilayer. The Cytoplasmic portion of the chain corresponds to alanine 127–glutamate 153. A helical membrane pass occupies residues isoleucine 154–isoleucine 174. At aspartate 175–serine 198 the chain is on the vacuolar side. Residues glycine 199–alanine 219 traverse the membrane as a helical segment. Topologically, residues serine 220 to threonine 228 are cytoplasmic. The chain crosses the membrane as a helical span at residues leucine 229–threonine 249. At lysine 250 to aspartate 271 the chain is on the vacuolar side. The chain crosses the membrane as a helical span at residues tryptophan 272 to serine 292. The Cytoplasmic segment spans residues phenylalanine 293 to isoleucine 312. A helical membrane pass occupies residues glycine 313–methionine 333. The Vacuolar portion of the chain corresponds to alanine 334–tryptophan 364. Residues alanine 365–threonine 385 form a helical membrane-spanning segment. Residues alanine 386–proline 416 lie on the Cytoplasmic side of the membrane. A helical transmembrane segment spans residues phenylalanine 417 to aspartate 437. Over aspartate 438–threonine 441 the chain is Vacuolar. The chain crosses the membrane as a helical span at residues aspartate 442–phenylalanine 462. At arginine 463–tryptophan 482 the chain is on the cytoplasmic side. The chain crosses the membrane as a helical span at residues serine 483–phenylalanine 503. The Vacuolar segment spans residues proline 504 to threonine 514. Residues methionine 515–valine 535 form a helical membrane-spanning segment. The Cytoplasmic segment spans residues tyrosine 536 to proline 571.

This sequence belongs to the amino acid-polyamine-organocation (APC) superfamily. Amino acid/choline transporter (ACT) (TC 2.A.3.4) family.

It localises to the vacuole membrane. Required for high-affinity, high-specificity GABA transport. Also transports putrescine. The sequence is that of GABA-specific permease (UGA4) from Saccharomyces cerevisiae (strain ATCC 204508 / S288c) (Baker's yeast).